The sequence spans 296 residues: NADH-cytochrome b5 reductase 2-A (296 aa).

A helical transmembrane segment spans residues 15–35; that stretch reads FVIGAPTIALCSYYYSSGAFL. An FAD-binding FR-type domain is found at 47 to 151; the sequence is NNWIDLPISR…KGPIPKWKWV (105 aa). 154 to 189 provides a ligand contact to FAD; it reads SFESITLIGGGTGITPLYQLIHAITKNPNDKTKIRL.

It belongs to the flavoprotein pyridine nucleotide cytochrome reductase family. It depends on FAD as a cofactor.

Its subcellular location is the mitochondrion outer membrane. The enzyme catalyses 2 Fe(III)-[cytochrome b5] + NADH = 2 Fe(II)-[cytochrome b5] + NAD(+) + H(+). May mediate the reduction of outer membrane cytochrome b5. This chain is NADH-cytochrome b5 reductase 2-A (MCR1A), found in Vanderwaltozyma polyspora (strain ATCC 22028 / DSM 70294 / BCRC 21397 / CBS 2163 / NBRC 10782 / NRRL Y-8283 / UCD 57-17) (Kluyveromyces polysporus).